The sequence spans 114 residues: Large ribosomal subunit protein uL22 (114 aa).

This sequence belongs to the universal ribosomal protein uL22 family. As to quaternary structure, part of the 50S ribosomal subunit.

Functionally, this protein binds specifically to 23S rRNA; its binding is stimulated by other ribosomal proteins, e.g. L4, L17, and L20. It is important during the early stages of 50S assembly. It makes multiple contacts with different domains of the 23S rRNA in the assembled 50S subunit and ribosome. Its function is as follows. The globular domain of the protein is located near the polypeptide exit tunnel on the outside of the subunit, while an extended beta-hairpin is found that lines the wall of the exit tunnel in the center of the 70S ribosome. The polypeptide is Large ribosomal subunit protein uL22 (Streptococcus mutans serotype c (strain ATCC 700610 / UA159)).